The following is a 257-amino-acid chain: Imidazole glycerol phosphate synthase subunit HisF (257 aa).

Residues Asp-11 and Asp-130 contribute to the active site.

The protein belongs to the HisA/HisF family. As to quaternary structure, heterodimer of HisH and HisF.

It localises to the cytoplasm. It carries out the reaction 5-[(5-phospho-1-deoxy-D-ribulos-1-ylimino)methylamino]-1-(5-phospho-beta-D-ribosyl)imidazole-4-carboxamide + L-glutamine = D-erythro-1-(imidazol-4-yl)glycerol 3-phosphate + 5-amino-1-(5-phospho-beta-D-ribosyl)imidazole-4-carboxamide + L-glutamate + H(+). The protein operates within amino-acid biosynthesis; L-histidine biosynthesis; L-histidine from 5-phospho-alpha-D-ribose 1-diphosphate: step 5/9. Functionally, IGPS catalyzes the conversion of PRFAR and glutamine to IGP, AICAR and glutamate. The HisF subunit catalyzes the cyclization activity that produces IGP and AICAR from PRFAR using the ammonia provided by the HisH subunit. The sequence is that of Imidazole glycerol phosphate synthase subunit HisF from Prochlorococcus marinus (strain SARG / CCMP1375 / SS120).